The primary structure comprises 542 residues: TNF receptor-associated factor 6 (542 aa).

Residues 1–374 (MSLLHCENSC…EAQQCNGIYI (374 aa)) are interaction with TAX1BP1. An RING-type; degenerate zinc finger spans residues 71-110 (CPICLMALREAVQTPCGHRFCKACIIKSIRDAGHKCPVDN). Lys-125 participates in a covalent cross-link: Glycyl lysine isopeptide (Lys-Gly) (interchain with G-Cter in SUMO); alternate. Residue Lys-125 forms a Glycyl lysine isopeptide (Lys-Gly) (interchain with G-Cter in ubiquitin); alternate linkage. Lys-143 is covalently cross-linked (Glycyl lysine isopeptide (Lys-Gly) (interchain with G-Cter in SUMO)). 2 TRAF-type zinc fingers span residues 151–203 (EHQA…EDKE) and 204–260 (IHEQ…NHLA). Residues 310–368 (SEVHNFQETIQQLEGRLVRQDHQIRELTAKMETQSMYVNELKRTIRTLEDKVAEIEAQQ) adopt a coiled-coil conformation. A Glycyl lysine isopeptide (Lys-Gly) (interchain with G-Cter in ubiquitin) cross-link involves residue Lys-339. In terms of domain architecture, MATH spans 370-519 (NGIYIWKIGN…DDTLLVRCEV (150 aa)). Residues 375-542 (WKIGNFGMHL…FQPRSTDSGI (168 aa)) form an interaction with TANK region. Lys-473 is covalently cross-linked (Glycyl lysine isopeptide (Lys-Gly) (interchain with G-Cter in SUMO)).

The protein belongs to the TNF receptor-associated factor family. A subfamily. As to quaternary structure, homotrimer. Homooligomer. N-terminal region is dimeric while C-terminal region is trimeric; maybe providing a mode of oligomerization. Upon IL1B treatment, forms a complex with PELI1, IRAK1, IRAK4 and MYD88; this complex recruits MAP3K7/TAK1, TAB1 and TAB2 to mediate NF-kappa-B activation. Direct binding of SMAD6 to PELI1 prevents the complex formation and hence negatively regulates IL1R-TLR signaling and eventually NF-kappa-B-mediated gene expression. Binds to TNFRSF5/CD40 and TNFRSF11A/RANK. Associates with NGFR, TNFRSF17, IRAK2, IRAK3, RIPK2, MAP3K1, MAP3K5, MAP3K14, CSK, TRAF, TRAF-interacting protein TRIP and TNF receptor associated protein TDP2. Interacts with IL17R. Interacts with SQSTM1 bridging NTRK1 and NGFR. Forms a ternary complex with SQSTM1 and PRKCZ. Interacts with PELI2 and PELI3. Binds UBE2V1. Interacts with TAX1BP1; this interaction mediates deubiquitination of TRAF6 and inhibition of NF-kappa-B activation. Interacts with ZNF675. Interacts with ARRB1 and ARRB2. Interacts with MAP3K7 and TAB1/MAP3K7IP1; during IL-1 signaling. Interacts with UBE2N. Interacts with TGFBR1, HDAC1 and RANGAP1. Interacts with AKT1, AKT2 and AKT3. Interacts (via TRAF domains) with NUMBL (via C-terminal). Interacts with RBCK1. Interacts with LIMD1 (via LIM domains). Interacts with RSAD2/viperin. Interacts (via C-terminus) with EIF2AK2/PKR (via the kinase catalytic domain). Interacts with ZFAND5. Interacts with IL1RL1. Interacts with TRAFD1. Interacts with AJUBA. Interacts with MAVS/IPS1. Interacts (via TRAF domains) with DYNC2I2 (via WD domains). Interacts with IFIT3 (via N-terminus). Interacts with TICAM2. Interacts with CARD14. Interacts with CD40 and MAP3K8; the interaction is required for ERK activation. Interacts with TICAM1 and this interaction is enhanced in the presence of WDFY1. Interacts with TANK; this interaction increases in response to DNA damage. Interacts with USP10; this interaction increases in response to DNA damage. Interacts with ZC3H12A; this interaction increases in response to DNA damage and is stimulated by TANK. Interacts with WDFY3. Interacts with TRIM13. Interacts with GPS2. Interacts (via C-terminus) with SASH1. Interacts with LRRC19. Interacts with IL17RA and TRAF3IP2. Interacts with TOMM70. Interacts with AMBRA1; interaction is required to mediate 'Lys-63'-linked ubiquitination of ULK1. Interacts with CRBN; this interaction inhibits TLR4-mediated signaling by preventing TRAF6-mediated ubiquitination of ECSIT. Post-translationally, sumoylated on Lys-125, Lys-143 and Lys-473 with SUMO1. Polyubiquitinated on Lys-125 by TRAF3IP2; after cell stimulation with IL17A. Polyubiquitinated on Lys-125; after cell stimulation with IL1B or TGFB. This ligand-induced cell stimulation leads to dimerization/oligomerization of TRAF6 molecules, followed by auto-ubiquitination which involves UBE2N and UBE2V1 and leads to TRAF6 activation. This 'Lys-63' site-specific poly-ubiquitination appears to be associated with the activation of signaling molecules. Endogenous autoubiquitination occurs only for the cytoplasmic form. Deubiquitinated by USP10 in a TANK-dependent manner, leading to the negative regulation of NF-kappa-B signaling upon DNA damage. LRRC19 induces 'Lys-63' ubiquitination. Ubiquitinated at Lys-339 by the SCF(FBXL2) complex, leading to its degradation by the proteasome.

It localises to the cytoplasm. The protein localises to the cell cortex. It is found in the nucleus. Its subcellular location is the lipid droplet. It carries out the reaction S-ubiquitinyl-[E2 ubiquitin-conjugating enzyme]-L-cysteine + [acceptor protein]-L-lysine = [E2 ubiquitin-conjugating enzyme]-L-cysteine + N(6)-ubiquitinyl-[acceptor protein]-L-lysine.. The protein operates within protein modification; protein ubiquitination. In terms of biological role, E3 ubiquitin ligase that, together with UBE2N and UBE2V1, mediates the synthesis of 'Lys-63'-linked-polyubiquitin chains conjugated to proteins, such as ECSIT, IKBKG, IRAK1, AKT1 and AKT2. Also mediates ubiquitination of free/unanchored polyubiquitin chain that leads to MAP3K7 activation. Leads to the activation of NF-kappa-B and JUN. Seems to also play a role in dendritic cells (DCs) maturation and/or activation. Represses c-Myb-mediated transactivation, in B-lymphocytes. Adapter protein that seems to play a role in signal transduction initiated via TNF receptor, IL-1 receptor and IL-17 receptor. Regulates osteoclast differentiation by mediating the activation of adapter protein complex 1 (AP-1) and NF-kappa-B, in response to RANK-L stimulation. Together with MAP3K8, mediates CD40 signals that activate ERK in B-cells and macrophages, and thus may play a role in the regulation of immunoglobulin production. Acts as a regulator of the JNK and NF-kappa-B signaling pathways by initiating assembly of heterotypic 'Lys-63'-/'Lys-48'-linked branched ubiquitin chains that are then recognized by TAB2: TRAF6 catalyzes initial 'Lys-63'-linked-polyubiquitin chains that are then branched via 'Lys-48'-linked polyubiquitin by HUWE1. 'Lys-63'-/'Lys-48'-linked branched ubiquitin chains protect 'Lys-63'-linkages from CYLD deubiquitination. Also participates in the TCR signaling by ubiquitinating LAT. In Bos taurus (Bovine), this protein is TNF receptor-associated factor 6 (TRAF6).